Reading from the N-terminus, the 517-residue chain is Transmembrane protein 180 (517 aa).

The Extracellular portion of the chain corresponds to 1–11; it reads MRLGGPWAWLL. The chain crosses the membrane as a helical span at residues 12–43; it reads GLPTAVVYGSLALFVSVLHNVFLLYYVDTFVS. Residues 44–55 are Cytoplasmic-facing; that stretch reads VYKIDKAAFWVG. A helical membrane pass occupies residues 56-74; sequence ETVFLLWNSLNDPLFGWLS. Residues 75–100 lie on the Extracellular side of the membrane; that stretch reads DRQFLSSQPRSGAGLSSRAVVLARVR. The helical transmembrane segment at 101–118 threads the bilayer; it reads ALGWHGPLLALSFLAFWV. Topologically, residues 119-126 are cytoplasmic; sequence PWAPAGLQ. A helical transmembrane segment spans residues 127–151; sequence FLLCLCLYDGFLTLVDLHHHALLAD. Topologically, residues 152-155 are extracellular; the sequence is LALS. The chain crosses the membrane as a helical span at residues 156-179; sequence AHDRTHLNFYCSLFSAAGSLSVFA. Residues 180–191 lie on the Cytoplasmic side of the membrane; sequence SYAFWNKEDFSS. The chain crosses the membrane as a helical span at residues 192-223; that stretch reads FRAFCLALATGSGLGFVGAARLLRRRVEAAGR. Topologically, residues 224 to 264 are extracellular; the sequence is EPGCPAMAVNDGLCEEELLVGGEEAGSITLGQYLQQLARHR. A helical transmembrane segment spans residues 265-292; the sequence is NFLWFVGMDLVQVFHCHFNSNFFPLFLE. Topologically, residues 293–305 are cytoplasmic; the sequence is HLLSDHISLSTGS. Residues 306–325 form a helical membrane-spanning segment; it reads FLLGISYVAPHLNNLYFLPL. At 326 to 330 the chain is on the extracellular side; the sequence is CRRWG. Residues 331–350 form a helical membrane-spanning segment; the sequence is VYAVVRGLFLLKLGLSLLML. Over 351-358 the chain is Cytoplasmic; the sequence is LAGPDHPG. The chain crosses the membrane as a helical span at residues 359 to 393; the sequence is LLCLFIASNRVFTEGTCKLLTLVVTDLVDEDLVLN. At 394–402 the chain is on the extracellular side; that stretch reads HRKQAASAL. A helical transmembrane segment spans residues 403–429; it reads LFGMVALVTKPGQTFAPLLGTWLLCFY. At 430 to 466 the chain is on the cytoplasmic side; the sequence is TGHDLFQQHPPAPVGSAQPWPEPPAPPPAQAPPLRQG. A helical membrane pass occupies residues 467–485; the sequence is CFYLLVLVPIACALLQLFT. Over 486 to 517 the chain is Extracellular; that stretch reads WSQFTLHGRRLHMVKAQRQSLSRAQTLDVKMV.

It is found in the cell membrane. The protein is Transmembrane protein 180 of Bos taurus (Bovine).